The following is a 398-amino-acid chain: NADH-quinone oxidoreductase subunit D (398 aa).

This sequence belongs to the complex I 49 kDa subunit family. As to quaternary structure, NDH-1 is composed of 14 different subunits. Subunits NuoB, C, D, E, F, and G constitute the peripheral sector of the complex.

It is found in the cell inner membrane. It carries out the reaction a quinone + NADH + 5 H(+)(in) = a quinol + NAD(+) + 4 H(+)(out). NDH-1 shuttles electrons from NADH, via FMN and iron-sulfur (Fe-S) centers, to quinones in the respiratory chain. The immediate electron acceptor for the enzyme in this species is believed to be ubiquinone. Couples the redox reaction to proton translocation (for every two electrons transferred, four hydrogen ions are translocated across the cytoplasmic membrane), and thus conserves the redox energy in a proton gradient. This chain is NADH-quinone oxidoreductase subunit D, found in Rhodospirillum centenum (strain ATCC 51521 / SW).